A 218-amino-acid chain; its full sequence is Tegument protein UL51 homolog (218 aa).

A lipid anchor (S-palmitoyl cysteine; by host) is attached at C11. Residues 199–218 form a disordered region; sequence APPPVVRQPEHSGPTELALT.

This sequence belongs to the herpesviridae UL51 family. Homodimer. Interacts with BBRF2; the BBRF2-BSRF1 complexes oligomerize which might play a role in tethering the viral nucleocapsids to the host Golgi membrane during secondary envelopment. Interacts with BGLF3.5. Interacts with BALF1. Interacts with glycoprotein gB. Interacts with glycoprotein heterodimer gH/gL. Post-translationally, phosphorylated. Palmitoylation is necessary for Golgi localization.

The protein localises to the host cytoplasm. It localises to the virion. The protein resides in the host Golgi apparatus. In terms of biological role, plays several roles during the time course of infection, including egress of virus particles from the perinuclear space and secondary envelopment of cytoplasmic capsids that bud into specific trans-Golgi network (TGN)-derived membranes. This chain is Tegument protein UL51 homolog, found in Homo sapiens (Human).